We begin with the raw amino-acid sequence, 95 residues long: MSVTIDDVTYIAELARLRFSDDEALKMTDELNTILHYVDTLNEVDTEGVLPLSNIHDQKNVLRADEEHEPIANAAALSNAPDSQDRFFRVPKVLG.

The protein belongs to the GatC family. As to quaternary structure, heterotrimer of A, B and C subunits.

It carries out the reaction L-glutamyl-tRNA(Gln) + L-glutamine + ATP + H2O = L-glutaminyl-tRNA(Gln) + L-glutamate + ADP + phosphate + H(+). It catalyses the reaction L-aspartyl-tRNA(Asn) + L-glutamine + ATP + H2O = L-asparaginyl-tRNA(Asn) + L-glutamate + ADP + phosphate + 2 H(+). Allows the formation of correctly charged Asn-tRNA(Asn) or Gln-tRNA(Gln) through the transamidation of misacylated Asp-tRNA(Asn) or Glu-tRNA(Gln) in organisms which lack either or both of asparaginyl-tRNA or glutaminyl-tRNA synthetases. The reaction takes place in the presence of glutamine and ATP through an activated phospho-Asp-tRNA(Asn) or phospho-Glu-tRNA(Gln). The chain is Aspartyl/glutamyl-tRNA(Asn/Gln) amidotransferase subunit C from Chlorobium phaeovibrioides (strain DSM 265 / 1930) (Prosthecochloris vibrioformis (strain DSM 265)).